An 899-amino-acid polypeptide reads, in one-letter code: Semaphorin-1A (899 aa).

Low complexity predominate over residues 1-20 (MLNSHNTNHNNNSASNSNYN). Residues 1-24 (MLNSHNTNHNNNSASNSNYNKGHK) form a disordered region. The Cytoplasmic portion of the chain corresponds to 1 to 40 (MLNSHNTNHNNNSASNSNYNKGHKMHLKSATAKATIMKHK). A helical membrane pass occupies residues 41–61 (LSKFYGYGWMQVFLLLTVLVI). Residues 62–657 (GNQSAWQENI…INAQYTVETL (596 aa)) are Extracellular-facing. N-linked (GlcNAc...) asparagine glycosylation is found at Asn-63, Asn-90, and Asn-117. Positions 74 to 543 (KLYVELGPED…TDSQVVAIQL (470 aa)) constitute a Sema domain. 2 disulfide bridges follow: Cys-141–Cys-151 and Cys-169–Cys-178. Residues Asn-187, Asn-207, and Asn-311 are each glycosylated (N-linked (GlcNAc...) asparagine). Disulfide bonds link Cys-288–Cys-402 and Cys-312–Cys-361. N-linked (GlcNAc...) asparagine glycosylation occurs at Asn-404. Residues 658 to 678 (VMAVLAGSIFSLLVGFFTGYF) form a helical membrane-spanning segment. Topologically, residues 679-899 (CGRRCHKDED…PKNCSYIYRD (221 aa)) are cytoplasmic. Disordered stretches follow at residues 735–766 (VLLP…QGPN) and 798–899 (VMGD…IYRD). A compositionally biased stretch (polar residues) spans 809 to 827 (FSTTRSVKKAVNNTNTRNR). The span at 828–837 (SLGRARRQPP) shows a compositional bias: basic residues. Positions 847-876 (SNSPQQQQQQSQQPHSSSGSSPVMSNSSSS) are enriched in low complexity.

This sequence belongs to the semaphorin family. Expressed by subsets of neurons and muscles.

It is found in the cell membrane. In terms of biological role, involved in growth cone guidance through its role in axonal repulsion. Function in neurons is essential for adult survival, motor neuron survival, and is important for climbing behavior and activity. The protein is Semaphorin-1A of Drosophila melanogaster (Fruit fly).